The chain runs to 713 residues: Bifunctional protein gal10 (713 aa).

The interval 1 to 350 (MAVQDEYILV…TIENPFGFQI (350 aa)) is galactowaldenase. Residue 7-38 (YILVTGGAGYIGSHTVIELINHGYKVIIVDNL) participates in NAD(+) binding. A mutarotase region spans residues 351 to 713 (DNYKWKLFNT…SASYNSGEYY (363 aa)). The active-site For mutarotase activity is the His532.

This sequence in the N-terminal section; belongs to the NAD(P)-dependent epimerase/dehydratase family. It in the C-terminal section; belongs to the aldose epimerase family. It depends on NAD(+) as a cofactor.

It catalyses the reaction UDP-alpha-D-glucose = UDP-alpha-D-galactose. The enzyme catalyses alpha-D-glucose = beta-D-glucose. It participates in carbohydrate metabolism; galactose metabolism. It functions in the pathway carbohydrate metabolism; hexose metabolism. Functionally, mutarotase converts alpha-aldose to the beta-anomer. It is active on D-glucose, L-arabinose, D-xylose, D-galactose, maltose and lactose. In Schizosaccharomyces pombe (strain 972 / ATCC 24843) (Fission yeast), this protein is Bifunctional protein gal10 (gal10).